The following is a 417-amino-acid chain: UDP-N-acetylglucosamine 1-carboxyvinyltransferase (417 aa).

22–23 contributes to the phosphoenolpyruvate binding site; it reads KN. UDP-N-acetyl-alpha-D-glucosamine is bound at residue arginine 93. The active-site Proton donor is cysteine 117. Cysteine 117 carries the post-translational modification 2-(S-cysteinyl)pyruvic acid O-phosphothioketal. UDP-N-acetyl-alpha-D-glucosamine is bound by residues 122 to 126, aspartate 305, and isoleucine 327; that span reads RPVDQ.

It belongs to the EPSP synthase family. MurA subfamily.

The protein localises to the cytoplasm. It carries out the reaction phosphoenolpyruvate + UDP-N-acetyl-alpha-D-glucosamine = UDP-N-acetyl-3-O-(1-carboxyvinyl)-alpha-D-glucosamine + phosphate. It participates in cell wall biogenesis; peptidoglycan biosynthesis. Cell wall formation. Adds enolpyruvyl to UDP-N-acetylglucosamine. The protein is UDP-N-acetylglucosamine 1-carboxyvinyltransferase of Chromobacterium violaceum (strain ATCC 12472 / DSM 30191 / JCM 1249 / CCUG 213 / NBRC 12614 / NCIMB 9131 / NCTC 9757 / MK).